The following is a 260-amino-acid chain: Cytochrome c oxidase subunit 2 (260 aa).

The Mitochondrial intermembrane segment spans residues 1–43 (MILRLLECRFFTIALCDAAEPWQLGFQDAATPMMQGIIDLHHD). A helical membrane pass occupies residues 44 to 64 (IFFFLILILVFVLWMLVRALW). The Mitochondrial matrix segment spans residues 65–84 (HFNEQTNPIPQRIVHGTTIE). The helical transmembrane segment at 85–105 (IIWTIFPSVILLFIAIPSFAL) threads the bilayer. Topologically, residues 106 to 260 (LYSMDGVLVD…VSNQLILQTN (155 aa)) are mitochondrial intermembrane. The Cu cation site is built by His189, Cys224, Glu226, Cys228, His232, and Met235. Glu226 contacts Mg(2+).

The protein belongs to the cytochrome c oxidase subunit 2 family. In terms of assembly, component of the cytochrome c oxidase (complex IV, CIV), a multisubunit enzyme composed of a catalytic core of 3 subunits and several supernumerary subunits. The complex exists as a monomer or a dimer and forms supercomplexes (SCs) in the inner mitochondrial membrane with ubiquinol-cytochrome c oxidoreductase (cytochrome b-c1 complex, complex III, CIII). It depends on Cu cation as a cofactor.

The protein localises to the mitochondrion inner membrane. It carries out the reaction 4 Fe(II)-[cytochrome c] + O2 + 8 H(+)(in) = 4 Fe(III)-[cytochrome c] + 2 H2O + 4 H(+)(out). In terms of biological role, component of the cytochrome c oxidase, the last enzyme in the mitochondrial electron transport chain which drives oxidative phosphorylation. The respiratory chain contains 3 multisubunit complexes succinate dehydrogenase (complex II, CII), ubiquinol-cytochrome c oxidoreductase (cytochrome b-c1 complex, complex III, CIII) and cytochrome c oxidase (complex IV, CIV), that cooperate to transfer electrons derived from NADH and succinate to molecular oxygen, creating an electrochemical gradient over the inner membrane that drives transmembrane transport and the ATP synthase. Cytochrome c oxidase is the component of the respiratory chain that catalyzes the reduction of oxygen to water. Electrons originating from reduced cytochrome c in the intermembrane space (IMS) are transferred via the dinuclear copper A center (CU(A)) of subunit 2 and heme A of subunit 1 to the active site in subunit 1, a binuclear center (BNC) formed by heme A3 and copper B (CU(B)). The BNC reduces molecular oxygen to 2 water molecules using 4 electrons from cytochrome c in the IMS and 4 protons from the mitochondrial matrix. This chain is Cytochrome c oxidase subunit 2 (COX2), found in Zea mays (Maize).